The sequence spans 349 residues: Ion-translocating oxidoreductase complex subunit D (349 aa).

3 consecutive transmembrane segments (helical) span residues 37–57 (AFFGWGTLVQVLLAIIVALSA), 73–90 (LSDNSAMLTAILIGVAIP), and 124–144 (AMAAYVLLLISFPVQMTTWIA). An FMN phosphoryl threonine modification is found at T185. A run of 5 helical transmembrane segments spans residues 212–232 (ATGVGWFWVNLAYLAGGLVLL), 239–259 (WHISTGVLAGLFIASSVGFLL), 265–285 (GSPLFHLFSGATMLAAFFIAT), 291–311 (ATSPRGRIIFGTLIGILVYII), and 315–335 (GGYPDAFAFAVLLANLCAPFI).

This sequence belongs to the NqrB/RnfD family. As to quaternary structure, the complex is composed of six subunits: RnfA, RnfB, RnfC, RnfD, RnfE and RnfG. FMN is required as a cofactor.

It is found in the cell inner membrane. Its function is as follows. Part of a membrane-bound complex that couples electron transfer with translocation of ions across the membrane. The chain is Ion-translocating oxidoreductase complex subunit D from Shewanella sp. (strain W3-18-1).